We begin with the raw amino-acid sequence, 81 residues long: MSNKGQLLQDPFLNTLRREHVPVSIYLVNGIKLQGQIESFDQYVVLLRNTVTQMVYKHAISTIVPGRAVNFSAAENDDAAA.

The 60-residue stretch at 10–69 (DPFLNTLRREHVPVSIYLVNGIKLQGQIESFDQYVVLLRNTVTQMVYKHAISTIVPGRAV) folds into the Sm domain.

Belongs to the Hfq family. As to quaternary structure, homohexamer.

In terms of biological role, RNA chaperone that binds small regulatory RNA (sRNAs) and mRNAs to facilitate mRNA translational regulation in response to envelope stress, environmental stress and changes in metabolite concentrations. Also binds with high specificity to tRNAs. The sequence is that of RNA-binding protein Hfq from Variovorax paradoxus (strain S110).